Consider the following 114-residue polypeptide: T cell receptor beta variable 5-8 (114 aa).

The N-terminal stretch at 1 to 21 is a signal peptide; that stretch reads MGPRLLFWALLCLLGTGPVEA. The Ig-like domain occupies 22 to 114; that stretch reads GVTQSPTHLI…SALYLCASSL (93 aa). C42 and C110 are disulfide-bonded. N90 carries an N-linked (GlcNAc...) asparagine glycan.

As to quaternary structure, alpha-beta TR is a heterodimer composed of an alpha and beta chain; disulfide-linked. The alpha-beta TR is associated with the transmembrane signaling CD3 coreceptor proteins to form the TR-CD3 (TcR or TCR). The assembly of alpha-beta TR heterodimers with CD3 occurs in the endoplasmic reticulum where a single alpha-beta TR heterodimer associates with one CD3D-CD3E heterodimer, one CD3G-CD3E heterodimer and one CD247 homodimer forming a stable octameric structure. CD3D-CD3E and CD3G-CD3E heterodimers preferentially associate with TR alpha and TR beta chains, respectively. The association of the CD247 homodimer is the last step of TcR assembly in the endoplasmic reticulum and is required for transport to the cell surface.

The protein localises to the cell membrane. In terms of biological role, v region of the variable domain of T cell receptor (TR) beta chain that participates in the antigen recognition. Alpha-beta T cell receptors are antigen specific receptors which are essential to the immune response and are present on the cell surface of T lymphocytes. Recognize peptide-major histocompatibility (MH) (pMH) complexes that are displayed by antigen presenting cells (APC), a prerequisite for efficient T cell adaptive immunity against pathogens. Binding of alpha-beta TR to pMH complex initiates TR-CD3 clustering on the cell surface and intracellular activation of LCK that phosphorylates the ITAM motifs of CD3G, CD3D, CD3E and CD247 enabling the recruitment of ZAP70. In turn ZAP70 phosphorylates LAT, which recruits numerous signaling molecules to form the LAT signalosome. The LAT signalosome propagates signal branching to three major signaling pathways, the calcium, the mitogen-activated protein kinase (MAPK) kinase and the nuclear factor NF-kappa-B (NF-kB) pathways, leading to the mobilization of transcription factors that are critical for gene expression and essential for T cell growth and differentiation. The T cell repertoire is generated in the thymus, by V-(D)-J rearrangement. This repertoire is then shaped by intrathymic selection events to generate a peripheral T cell pool of self-MH restricted, non-autoaggressive T cells. Post-thymic interaction of alpha-beta TR with the pMH complexes shapes TR structural and functional avidity. The chain is T cell receptor beta variable 5-8 from Homo sapiens (Human).